Consider the following 253-residue polypeptide: 5-oxoprolinase subunit A (253 aa).

Belongs to the LamB/PxpA family. In terms of assembly, forms a complex composed of PxpA, PxpB and PxpC.

It carries out the reaction 5-oxo-L-proline + ATP + 2 H2O = L-glutamate + ADP + phosphate + H(+). Its function is as follows. Catalyzes the cleavage of 5-oxoproline to form L-glutamate coupled to the hydrolysis of ATP to ADP and inorganic phosphate. This Chloroflexus aurantiacus (strain ATCC 29364 / DSM 637 / Y-400-fl) protein is 5-oxoprolinase subunit A.